The chain runs to 646 residues: Serine/threonine-protein kinase max-2 (646 aa).

Residues 19–40 (FSPSDKDKDRDDEMKPSSSAMD) are disordered. Residues 22 to 33 (SDKDKDRDDEMK) are compositionally biased toward basic and acidic residues. The CRIB domain occupies 41-54 (ISQPYNTVHRVHVG). The segment at 136–345 (LQCSNGSATS…PPPPEEPPVR (210 aa)) is disordered. Composition is skewed to low complexity over residues 142 to 157 (SATSPSTSVSASSSSA) and 167 to 180 (LSTASSTDTSLSLS). Residues 196–205 (SAPQLKTFTG) are compositionally biased toward polar residues. The segment covering 214 to 223 (SPFPPQPPVL) has biased composition (pro residues). Residues 229–245 (TASAVATTTTNPTTSNG) are compositionally biased toward low complexity. The span at 246–262 (APPPVPGSKGPPVPPKP) shows a compositional bias: pro residues. Low complexity-rich tracts occupy residues 273 to 307 (SSGCSSPQQYSSARSVGNSLSNGSVVSTTSSDGDV) and 323 to 334 (KNGNTTTNKTTV). The region spanning 376 to 627 (YEMKKQIGVG…TTELLAHPFL (252 aa)) is the Protein kinase domain. ATP-binding positions include 382–390 (IGVGASGTV) and Lys405. Catalysis depends on Asp496, which acts as the Proton acceptor.

It belongs to the protein kinase superfamily. STE Ser/Thr protein kinase family. STE20 subfamily. Interacts with mlk-1; the interaction is independent of max-2 and mlk-1 kinase activities. Interacts with mig-2 (GTP-bound form). Mg(2+) is required as a cofactor.

The protein localises to the perikaryon. The protein resides in the cell projection. It localises to the dendrite. It is found in the cytoplasm. The catalysed reaction is L-seryl-[protein] + ATP = O-phospho-L-seryl-[protein] + ADP + H(+). It catalyses the reaction L-threonyl-[protein] + ATP = O-phospho-L-threonyl-[protein] + ADP + H(+). In terms of biological role, serine/threonine-protein kinase, which phosphorylates mlk-1. Involved in the stress response to heavy metals by activating the mlk-1/mek-1/kgb-1 pathway. In ventral cord commissural motoneurons, required for dorsal axon guidance downstream of unc-6/netrin repulsion receptor unc-5 and probably of Rho GTPases ced-10 and mig-2. Plays a redundant role with mig-10 in orientating axonal growth of HSN neurons. Plays a redundant role with pak-1 in P neuroblast migration and in distal tip cell (DTC)-mediated guidance of gonad elongation probably downstream of Rho GTPases. In association with pak-2, plays a role in embryogenesis. In association with pak-1, may be involved in spermatogenesis. This Caenorhabditis elegans protein is Serine/threonine-protein kinase max-2.